Here is a 152-residue protein sequence, read N- to C-terminus: UPF0756 membrane protein Moth_1009 (152 aa).

4 helical membrane passes run 5–25, 41–61, 75–95, and 117–137; these read LIIL…VALA, IFPF…IAAI, LGHV…LITT, and LILG…GPFI.

The protein belongs to the UPF0756 family.

Its subcellular location is the cell membrane. The chain is UPF0756 membrane protein Moth_1009 from Moorella thermoacetica (strain ATCC 39073 / JCM 9320).